A 122-amino-acid chain; its full sequence is uncharacterized protein (122 aa).

Basic and acidic residues predominate over residues 1-15; that stretch reads MAEPGGRGDYRKDGR. The interval 1–49 is disordered; that stretch reads MAEPGGRGDYRKDGRLPSLSRSPLSTTLGTSPACGLEIPPTSGARPDGS. A compositionally biased stretch (low complexity) spans 16-32; sequence LPSLSRSPLSTTLGTSP.

This is an uncharacterized protein from Homo sapiens (Human).